The chain runs to 217 residues: Methylthioribulose-1-phosphate dehydratase (217 aa).

H106 and H108 together coordinate Zn(2+).

The protein belongs to the aldolase class II family. MtnB subfamily. Requires Zn(2+) as cofactor.

The catalysed reaction is 5-(methylsulfanyl)-D-ribulose 1-phosphate = 5-methylsulfanyl-2,3-dioxopentyl phosphate + H2O. It participates in amino-acid biosynthesis; L-methionine biosynthesis via salvage pathway; L-methionine from S-methyl-5-thio-alpha-D-ribose 1-phosphate: step 2/6. Catalyzes the dehydration of methylthioribulose-1-phosphate (MTRu-1-P) into 2,3-diketo-5-methylthiopentyl-1-phosphate (DK-MTP-1-P). This chain is Methylthioribulose-1-phosphate dehydratase, found in Xanthomonas euvesicatoria pv. vesicatoria (strain 85-10) (Xanthomonas campestris pv. vesicatoria).